Reading from the N-terminus, the 108-residue chain is Glutaredoxin-1 (108 aa).

In terms of domain architecture, Glutaredoxin spans 3–106 (EEFVQQRLAN…DILSSIGVLR (104 aa)). C23 and C26 are oxidised to a cystine.

The protein belongs to the glutaredoxin family.

It localises to the virion. Its function is as follows. Has thioltransferase and dehydroascorbate reductase activities. This is Glutaredoxin-1 (OPG075) from Cowpox virus (strain GRI-90 / Grishak) (CPV).